Here is a 347-residue protein sequence, read N- to C-terminus: NADH-ubiquinone oxidoreductase chain 2 (347 aa).

The next 11 membrane-spanning stretches (helical) occupy residues 3–23, 25–45, 59–79, 96–116, 122–142, 149–169, 178–198, 200–220, 237–257, 274–294, and 325–345; these read PPILITIMLTVVSGTMIVLTS, HWLTVWIGFEMNMLAIIPILM, YLLTQATASMILMMGVAIDLL, AMMTIALAMKLGLAPFHFWVP, IHMSSGLILLTWQKIAPLSIL, INPNLLLPMAIASVLIGGWGG, ILAYSSIAHMGWMAAITLYNP, MMILNLTIYIIMTSTTFMLFM, APLITSLILMLMLSLGGLPPL, EMIIVPTLLAMTALLNLYFYM, and LLSPLIVVSTMLLPITPLLSI.

It belongs to the complex I subunit 2 family. In terms of assembly, core subunit of respiratory chain NADH dehydrogenase (Complex I) which is composed of 45 different subunits. Interacts with TMEM242.

The protein resides in the mitochondrion inner membrane. It catalyses the reaction a ubiquinone + NADH + 5 H(+)(in) = a ubiquinol + NAD(+) + 4 H(+)(out). Its function is as follows. Core subunit of the mitochondrial membrane respiratory chain NADH dehydrogenase (Complex I) which catalyzes electron transfer from NADH through the respiratory chain, using ubiquinone as an electron acceptor. Essential for the catalytic activity and assembly of complex I. The sequence is that of NADH-ubiquinone oxidoreductase chain 2 from Cynictis penicillata (Yellow mongoose).